A 373-amino-acid chain; its full sequence is Peroxisomal biogenesis factor 3 (373 aa).

Residues 1-15 (MFRSTWNFLKRHKKK) are Cytoplasmic-facing. Residues 1–45 (MFRSTWNFLKRHKKKCIFLGTVLGGVYILGKYGQKKIREIQEREA) form a targeting to peroxisomes region. A helical transmembrane segment spans residues 16–36 (CIFLGTVLGGVYILGKYGQKK). At 37-116 (IREIQEREAA…LKIISFTRSI (80 aa)) the chain is on the peroxisomal side. The chain crosses the membrane as a helical span at residues 117-140 (VAVYSTCMLVVLLRVQLNIIGGYI). Residues 120 to 136 (YSTCMLVVLLRVQLNII) form an interaction with PEX19 region. Residues 141–373 (YLDNAAVGKN…AFSTPQQLEK (233 aa)) are Cytoplasmic-facing.

It belongs to the peroxin-3 family. As to quaternary structure, interacts with PEX19.

Its subcellular location is the peroxisome membrane. Its function is as follows. Involved in peroxisome biosynthesis and integrity. Assembles membrane vesicles before the matrix proteins are translocated. As a docking factor for PEX19, is necessary for the import of peroxisomal membrane proteins in the peroxisomes. The sequence is that of Peroxisomal biogenesis factor 3 (PEX3) from Bos taurus (Bovine).